A 263-amino-acid chain; its full sequence is MPEGPEIRRAADKLEAAIKGEPLTDAWFAFPQLQPYQSLLIGQRVTHIATRGKALLTHFSGGLTLYSHNQLYGVWRVVDAGEQPASNRVLRVRLQTARKAILLYSASDIEMLTAEQVAHHPFLLRVGPDVLDMTLTVEEVKARLLSAKFRHRQFSGLLLDQAFLAGLGNYLRVEILWQVGLSGKRKAAELSDSQLDALAHALLAIPRLSYHTRGQADDNKHHGALFRFKVFHRDGERCERCGGVIEKTTLSSRPFYWCPGCQH.

The Schiff-base intermediate with DNA role is filled by Pro2. The Proton donor role is filled by Glu3. Lys53 serves as the catalytic Proton donor; for beta-elimination activity. The DNA site is built by Gln70, Arg125, and Asn169. An FPG-type zinc finger spans residues Lys229–His263. The active-site Proton donor; for delta-elimination activity is Arg253.

This sequence belongs to the FPG family. Requires Zn(2+) as cofactor.

The enzyme catalyses 2'-deoxyribonucleotide-(2'-deoxyribose 5'-phosphate)-2'-deoxyribonucleotide-DNA = a 3'-end 2'-deoxyribonucleotide-(2,3-dehydro-2,3-deoxyribose 5'-phosphate)-DNA + a 5'-end 5'-phospho-2'-deoxyribonucleoside-DNA + H(+). Functionally, involved in base excision repair of DNA damaged by oxidation or by mutagenic agents. Acts as a DNA glycosylase that recognizes and removes damaged bases. Has a preference for oxidized pyrimidines, such as thymine glycol, 5,6-dihydrouracil and 5,6-dihydrothymine. Has AP (apurinic/apyrimidinic) lyase activity and introduces nicks in the DNA strand. Cleaves the DNA backbone by beta-delta elimination to generate a single-strand break at the site of the removed base with both 3'- and 5'-phosphates. The polypeptide is Endonuclease 8 (Klebsiella pneumoniae (strain 342)).